Consider the following 226-residue polypeptide: Deoxyribose-phosphate aldolase (226 aa).

Residue aspartate 96 is the Proton donor/acceptor of the active site. The active-site Schiff-base intermediate with acetaldehyde is lysine 157. The active-site Proton donor/acceptor is lysine 185.

This sequence belongs to the DeoC/FbaB aldolase family. DeoC type 1 subfamily.

Its subcellular location is the cytoplasm. It carries out the reaction 2-deoxy-D-ribose 5-phosphate = D-glyceraldehyde 3-phosphate + acetaldehyde. Its pathway is carbohydrate degradation; 2-deoxy-D-ribose 1-phosphate degradation; D-glyceraldehyde 3-phosphate and acetaldehyde from 2-deoxy-alpha-D-ribose 1-phosphate: step 2/2. Functionally, catalyzes a reversible aldol reaction between acetaldehyde and D-glyceraldehyde 3-phosphate to generate 2-deoxy-D-ribose 5-phosphate. This chain is Deoxyribose-phosphate aldolase, found in Trichormus variabilis (strain ATCC 29413 / PCC 7937) (Anabaena variabilis).